A 688-amino-acid chain; its full sequence is Beta-galactosidase BglY (688 aa).

Arginine 118 is a substrate binding site. Cysteine 122 serves as a coordination point for Zn(2+). Asparagine 156 serves as a coordination point for substrate. Catalysis depends on glutamate 157, which acts as the Proton donor. The Zn(2+) site is built by cysteine 162, cysteine 164, and cysteine 167. Glutamate 313 (nucleophile) is an active-site residue. Substrate contacts are provided by residues tryptophan 321 and 361 to 364 (EKFH).

This sequence belongs to the glycosyl hydrolase 42 family.

The catalysed reaction is Hydrolysis of terminal non-reducing beta-D-galactose residues in beta-D-galactosides.. With respect to regulation, ca(2+), Mg(2+) and EDTA have little effect on enzyme activity at 1-10 mM. Zn(2+) at 3, 5, 7 or 10 mM inhibits activity by 20%, 30%, 40% and 65%, respectively. In terms of biological role, hydrolyzes o-nitrophenyl-beta-D-galactopyranoside (ONPG) and p-nitrophenyl-beta-D-fucopyranoside (PNPF), but not p-nitrophenyl-beta-D-glucopyranoside (PNPG), p-nitrophenyl-beta-D-xylopyranoside (PNPX) or p-nitrophenyl-beta-D-arabinopyranoside (PNPA). Also hydrolyzes lactose, including lactose in milk. The sequence is that of Beta-galactosidase BglY (bglY) from Alicyclobacillus acidocaldarius subsp. acidocaldarius (strain ATCC 27009 / DSM 446 / BCRC 14685 / JCM 5260 / KCTC 1825 / NBRC 15652 / NCIMB 11725 / NRRL B-14509 / 104-IA) (Bacillus acidocaldarius).